The sequence spans 1806 residues: SH3 and multiple ankyrin repeat domains protein 3 (1806 aa).

The segment at 76–150 is intramolecular interaction with the ANK repeats; the sequence is MDGPGASAVV…KFLDEERLLQ (75 aa). The residue at position 197 (Y197) is a Phosphotyrosine. ANK repeat units lie at residues 223-253, 257-286, 290-320, 324-353, 357-386, and 390-420; these read SGECPLSLAAQLDNATDLLKVLKNGGAHLDF, DGLTAVHCATRQRNAAALTTLLDLGASPDY, RGLTPLYHSALGGGDALCCELLLHDHAQLGI, NGWQEIHQACRFGHVQHLEHLLFYGADMGA, SGNTALHICALYNQESCARVLLFRGANRDV, and NSQTAFQVAIIAGNFELAEVIKTHKDSDVVP. Residues 407-416 are compositionally biased toward basic and acidic residues; the sequence is AEVIKTHKDS. Residues 407-467 form a disordered region; sequence AEVIKTHKDS…AQPAASPGPS (61 aa). Pro residues predominate over residues 439-461; it reads LASPRPLQRSASDINLKGEAQPA. Residues S448, S450, S463, S470, and S558 each carry the phosphoserine modification. Residues 546–605 form the SH3 domain; the sequence is VPGRKFIAVKAHSPQGEGEIPLHRGEAVKVLSIGEGGFWEGTVKGRTGWFPADCVEEVQM. Residue Y631 is modified to Phosphotyrosine. The 95-residue stretch at 646–740 folds into the PDZ domain; it reads VAVLQKRDHE…RLVMKVVSVT (95 aa). 2 disordered regions span residues 665–689 and 760–853; these read KAETPIEEFTPTPAFPALQYLESVD and PSTT…KGIP. Residues 753-760 are required for interaction with ABI1; that stretch reads PPPPKRAP. S770 bears the Phosphoserine mark. Pro residues predominate over residues 813-845; it reads ATVKQRPTSRRITPAEISSLFERQGLPGPEKLP. Phosphoserine occurs at positions 857, 866, and 877. Residues 871 to 1021 form a disordered region; that stretch reads RFPRSTSMQD…FSASLFAPSK (151 aa). Positions 906–915 are enriched in pro residues; it reads DSGPPPAFSP. Phosphoserine occurs at positions 966 and 973. Position 988 is a phosphothreonine (T988). A compositionally biased stretch (gly residues) spans 993 to 1013; it reads PKRRPRPPGPDSPYANLGAFS. Y1006 is subject to Phosphotyrosine. R1041 carries the post-translational modification Asymmetric dimethylarginine. Residues 1115–1124 are compositionally biased toward low complexity; the sequence is PGADLPSLQP. Disordered stretches follow at residues 1115–1460, 1475–1525, and 1546–1584; these read PGAD…MSTL, ADGH…HHAA, and SKLWGDPVESRGLPGPEDDKPTVISELSSRLQQLNKDTR. A compositionally biased stretch (basic and acidic residues) spans 1173–1193; that stretch reads TGKPLDPSSPLALALAARERA. Position 1204 is a phosphothreonine (T1204). 4 positions are modified to phosphoserine: S1208, S1233, S1237, and S1240. Residues 1251–1261 are compositionally biased toward pro residues; it reads EAEKVPREERK. T1309 is subject to Phosphothreonine. Residue S1328 is modified to Phosphoserine. The span at 1360–1370 shows a compositional bias: basic and acidic residues; the sequence is LPPAQLSSSDE. Low complexity-rich tracts occupy residues 1371 to 1392 and 1444 to 1460; these read ETREELARIGLVPPPEEFANGV and HLETTSTISTVSSMSTL. Residues 1485–1491 carry the SH3-binding motif; it reads PPVPPKP. Position 1495 is a phosphoserine (S1495). The segment covering 1495–1505 has biased composition (polar residues); sequence SPLGKGPVTFR. Positions 1569-1589 form a coiled coil; it reads ISELSSRLQQLNKDTRSLGEE. A phosphoserine mark is found at S1585, S1596, S1604, and S1614. A compositionally biased stretch (low complexity) spans 1627 to 1637; that stretch reads PGGPGGGASYS. Positions 1627–1664 are disordered; that stretch reads PGGPGGGASYSVRPSGRYPVARRAPSPVKPASLERVEG. The segment covering 1638-1657 has biased composition (pro residues); the sequence is VRPSGRYPVARRAPSPVKPA. 3 positions are modified to phosphoserine: S1709, S1711, and S1713. Residues 1743–1806 enclose the SAM domain; the sequence is WSKFDVGDWL…ERALRQLDGS (64 aa).

As to quaternary structure, may homomultimerize via its SAM domain. Interacts with BAIAP2, DBNL and SLC17A7/VGLUT1. Interacts with DLGAP1/GKAP, GRM1/MGLUR1, GRM5/MGLUR5 and LZTS3 C-termini via its PDZ domain. Interacts with ABI1, HOMER1, HOMER2, HOMER3 and CTTN/cortactin SH3 domain. Is part of a complex with DLG4/PSD-95 and DLGAP1/GKAP. Interacts (via PDZ domain) with the GRIA1 subunit of the AMPA receptor (via PDZ-binding motif). Interacts with WASF1 and CYFIP2; the interactions mediate the association of SHANK3 with the WAVE1 complex. Interacts with ARPC2; the interaction probably mediates the association of SHANK3 with the Arp2/3 complex. Interacts (via ANK repeats) with SHARPIN and SPTAN1. Interacts (via PDZ domain) with ARHGAP44 (probably via PDZ-binding motif); the interaction takes place in dendritic spines and promotes GRIA1 exocytosis. Interacts with CAMK2A. Interacts with DIP2A. Interacts with ADGRL3. Expressed in the cerebral cortex and the cerebellum.

It is found in the cytoplasm. It localises to the postsynaptic density. Its subcellular location is the cell projection. The protein resides in the dendritic spine. In terms of biological role, major scaffold postsynaptic density protein which interacts with multiple proteins and complexes to orchestrate the dendritic spine and synapse formation, maturation and maintenance. Interconnects receptors of the postsynaptic membrane including NMDA-type and metabotropic glutamate receptors via complexes with GKAP/PSD-95 and HOMER, respectively, and the actin-based cytoskeleton. Plays a role in the structural and functional organization of the dendritic spine and synaptic junction through the interaction with Arp2/3 and WAVE1 complex as well as the promotion of the F-actin clusters. By way of this control of actin dynamics, participates in the regulation of developing neurons growth cone motility and the NMDA receptor-signaling. Also modulates GRIA1 exocytosis and GRM5/MGLUR5 expression and signaling to control the AMPA and metabotropic glutamate receptor-mediated synaptic transmission and plasticity. May be required at an early stage of synapse formation and be inhibited by IGF1 to promote synapse maturation. The sequence is that of SH3 and multiple ankyrin repeat domains protein 3 (SHANK3) from Homo sapiens (Human).